The sequence spans 173 residues: Transcription factor E (173 aa).

The HTH TFE/IIEalpha-type domain maps to 9 to 92 (ADKAIFAYLH…LWELELDNMY (84 aa)).

It belongs to the TFE family. In terms of assembly, monomer. Interaction with RNA polymerase subunits RpoF and RpoE is necessary for Tfe stimulatory transcription activity. Able to interact with Tbp and RNA polymerase in the absence of DNA promoter. Interacts both with the preinitiation and elongation complexes.

Its function is as follows. Transcription factor that plays a role in the activation of archaeal genes transcribed by RNA polymerase. Facilitates transcription initiation by enhancing TATA-box recognition by TATA-box-binding protein (Tbp), and transcription factor B (Tfb) and RNA polymerase recruitment. Not absolutely required for transcription in vitro, but particularly important in cases where Tbp or Tfb function is not optimal. It dynamically alters the nucleic acid-binding properties of RNA polymerases by stabilizing the initiation complex and destabilizing elongation complexes. Seems to translocate with the RNA polymerase following initiation and acts by binding to the non template strand of the transcription bubble in elongation complexes. This Methanospirillum hungatei JF-1 (strain ATCC 27890 / DSM 864 / NBRC 100397 / JF-1) protein is Transcription factor E.